The following is an 88-amino-acid chain: Cell division topological specificity factor (88 aa).

The protein belongs to the MinE family.

In terms of biological role, prevents the cell division inhibition by proteins MinC and MinD at internal division sites while permitting inhibition at polar sites. This ensures cell division at the proper site by restricting the formation of a division septum at the midpoint of the long axis of the cell. In Escherichia fergusonii (strain ATCC 35469 / DSM 13698 / CCUG 18766 / IAM 14443 / JCM 21226 / LMG 7866 / NBRC 102419 / NCTC 12128 / CDC 0568-73), this protein is Cell division topological specificity factor.